Reading from the N-terminus, the 237-residue chain is Phosphoribosylaminoimidazole-succinocarboxamide synthase (237 aa).

It belongs to the SAICAR synthetase family.

It catalyses the reaction 5-amino-1-(5-phospho-D-ribosyl)imidazole-4-carboxylate + L-aspartate + ATP = (2S)-2-[5-amino-1-(5-phospho-beta-D-ribosyl)imidazole-4-carboxamido]succinate + ADP + phosphate + 2 H(+). It functions in the pathway purine metabolism; IMP biosynthesis via de novo pathway; 5-amino-1-(5-phospho-D-ribosyl)imidazole-4-carboxamide from 5-amino-1-(5-phospho-D-ribosyl)imidazole-4-carboxylate: step 1/2. The sequence is that of Phosphoribosylaminoimidazole-succinocarboxamide synthase from Escherichia coli O7:K1 (strain IAI39 / ExPEC).